We begin with the raw amino-acid sequence, 506 residues long: Putative transporter SVOPL (506 aa).

Helical transmembrane passes span serine 57–valine 77, alanine 104–isoleucine 124, valine 133–serine 153, leucine 190–methionine 210, tryptophan 220–proline 240, threonine 297–leucine 317, leucine 362–valine 382, phenylalanine 397–leucine 417, isoleucine 444–alanine 464, and valine 472–phenylalanine 492.

Belongs to the major facilitator superfamily.

The protein resides in the membrane. The protein is Putative transporter SVOPL (svopl) of Danio rerio (Zebrafish).